The chain runs to 324 residues: Delta-aminolevulinic acid dehydratase (324 aa).

Zn(2+)-binding residues include C120, C122, and C130. The active-site Schiff-base intermediate with substrate is the K195. Positions 205 and 216 each coordinate 5-aminolevulinate. E232 is a Mg(2+) binding site. The active-site Schiff-base intermediate with substrate is K247. Residues S273 and Y312 each coordinate 5-aminolevulinate.

It belongs to the ALAD family. Homooctamer. The cofactor is Zn(2+).

The enzyme catalyses 2 5-aminolevulinate = porphobilinogen + 2 H2O + H(+). Its pathway is porphyrin-containing compound metabolism; protoporphyrin-IX biosynthesis; coproporphyrinogen-III from 5-aminolevulinate: step 1/4. Its activity is regulated as follows. Allosteric enzyme. Stimulated by magnesium ions. Catalyzes an early step in the biosynthesis of tetrapyrroles. Binds two molecules of 5-aminolevulinate per subunit, each at a distinct site, and catalyzes their condensation to form porphobilinogen. This chain is Delta-aminolevulinic acid dehydratase (hemB), found in Escherichia coli (strain K12).